A 202-amino-acid polypeptide reads, in one-letter code: Protein-methionine-sulfoxide reductase heme-binding subunit MsrQ (202 aa).

Helical transmembrane passes span 8-28 (IVWLKVLLHLAGFLPLVWLFW), 82-102 (LWCFAWATLHLTSYTLLELGI), 116-136 (PYLTLGMISWAILLALAVTST), 149-169 (LLHNFVYLVAILAPIHYLWSV), and 171-191 (IVSPQPVVYALLAAGLLTWRY).

It belongs to the MsrQ family. As to quaternary structure, heterodimer of a catalytic subunit (MsrP) and a heme-binding subunit (MsrQ). FMN serves as cofactor. The cofactor is heme b.

Its subcellular location is the cell inner membrane. In terms of biological role, part of the MsrPQ system that repairs oxidized periplasmic proteins containing methionine sulfoxide residues (Met-O), using respiratory chain electrons. Thus protects these proteins from oxidative-stress damage caused by reactive species of oxygen and chlorine generated by the host defense mechanisms. MsrPQ is essential for the maintenance of envelope integrity under bleach stress, rescuing a wide series of structurally unrelated periplasmic proteins from methionine oxidation. MsrQ provides electrons for reduction to the reductase catalytic subunit MsrP, using the quinone pool of the respiratory chain. The chain is Protein-methionine-sulfoxide reductase heme-binding subunit MsrQ from Klebsiella pneumoniae subsp. pneumoniae (strain ATCC 700721 / MGH 78578).